Consider the following 135-residue polypeptide: uncharacterized protein (135 aa).

Residues 25-123 (CPIQHVVDLL…LGSDWLEQES (99 aa)) form the HTH hxlR-type domain.

This is an uncharacterized protein from Synechocystis sp. (strain ATCC 27184 / PCC 6803 / Kazusa).